Consider the following 236-residue polypeptide: THO complex subunit 7B (236 aa).

Residues 99–228 (EANLREKESF…IRSASEDQRN (130 aa)) are a coiled coil.

This sequence belongs to the THOC7 family. In terms of assembly, component of the THO complex, which is composed of THO1, THO2, THO3, THO5, THO6 and THO7.

It is found in the nucleus. Its function is as follows. Acts as a component of the THO subcomplex of the TREX complex which is thought to couple mRNA transcription, processing and nuclear export. In Arabidopsis thaliana (Mouse-ear cress), this protein is THO complex subunit 7B (THO7B).